Reading from the N-terminus, the 177-residue chain is ADP-ribosylation factor-like protein 17 (177 aa).

Residue Gly-2 is the site of N-myristoyl glycine attachment. GTP is bound by residues 24–31 (SLDTAGKT), 67–71 (DVGSH), and 125–128 (LPHS).

The protein belongs to the small GTPase superfamily. Arf family.

The protein resides in the golgi apparatus. In terms of biological role, GTP-binding protein that functions as an allosteric activator of the cholera toxin catalytic subunit, an ADP-ribosyltransferase. Involved in protein trafficking; may modulate vesicle budding and uncoating within the Golgi apparatus. The sequence is that of ADP-ribosylation factor-like protein 17 (ARL17A) from Homo sapiens (Human).